Consider the following 444-residue polypeptide: Tol-Pal system protein TolB (444 aa).

An N-terminal signal peptide occupies residues 1–19 (MRNIIYFILSLLFSVTSYA).

Belongs to the TolB family. In terms of assembly, the Tol-Pal system is composed of five core proteins: the inner membrane proteins TolA, TolQ and TolR, the periplasmic protein TolB and the outer membrane protein Pal. They form a network linking the inner and outer membranes and the peptidoglycan layer.

It is found in the periplasm. Its function is as follows. Part of the Tol-Pal system, which plays a role in outer membrane invagination during cell division and is important for maintaining outer membrane integrity. This is Tol-Pal system protein TolB from Rickettsia peacockii (strain Rustic).